A 286-amino-acid polypeptide reads, in one-letter code: Pyridoxal kinase PdxY (286 aa).

Substrate-binding positions include serine 9 and 44-45; that span reads TQ. ATP-binding positions include aspartate 111, alanine 143, glutamate 148, lysine 181, and 208 to 211; that span reads RPLV. Residue aspartate 223 participates in substrate binding.

It belongs to the pyridoxine kinase family. PdxY subfamily. Homodimer. It depends on Mg(2+) as a cofactor.

It carries out the reaction pyridoxal + ATP = pyridoxal 5'-phosphate + ADP + H(+). It participates in cofactor metabolism; pyridoxal 5'-phosphate salvage; pyridoxal 5'-phosphate from pyridoxal: step 1/1. Functionally, pyridoxal kinase involved in the salvage pathway of pyridoxal 5'-phosphate (PLP). Catalyzes the phosphorylation of pyridoxal to PLP. The chain is Pyridoxal kinase PdxY from Salmonella choleraesuis (strain SC-B67).